The primary structure comprises 368 residues: 3-isopropylmalate dehydrogenase (368 aa).

77–88 (GPKWGTGAVRPE) contributes to the NAD(+) binding site. Arginine 95, arginine 105, arginine 134, and aspartate 226 together coordinate substrate. Residues aspartate 226, aspartate 251, and aspartate 255 each contribute to the Mg(2+) site. An NAD(+)-binding site is contributed by 290–301 (GSAPDLPANKVN).

This sequence belongs to the isocitrate and isopropylmalate dehydrogenases family. In terms of assembly, homodimer. Mg(2+) is required as a cofactor. Mn(2+) serves as cofactor.

The protein localises to the cytoplasm. The catalysed reaction is (2R,3S)-3-isopropylmalate + NAD(+) = 4-methyl-2-oxopentanoate + CO2 + NADH. It participates in amino-acid biosynthesis; L-leucine biosynthesis; L-leucine from 3-methyl-2-oxobutanoate: step 3/4. Catalyzes the oxidation of 3-carboxy-2-hydroxy-4-methylpentanoate (3-isopropylmalate) to 3-carboxy-4-methyl-2-oxopentanoate. The product decarboxylates to 4-methyl-2 oxopentanoate. This Kodamaea ohmeri (Yeast) protein is 3-isopropylmalate dehydrogenase (LEU2).